The chain runs to 476 residues: PRAME family member 5 (476 aa).

The stretch at 97-124 is one LRR 1; degenerate repeat; sequence RWKLQVLDLQDVCENFWMVWSEAMAHGC. The LRR 2; degenerate repeat unit spans residues 179–203; that stretch reads HLCCKKLKILGMPFRNIRSILKMVN. One copy of the LRR 3; degenerate repeat lies at 204-230; sequence LDCIQEVEVNCKWVLPILTQFTPYLGH. One copy of the LRR 4; degenerate repeat lies at 231 to 266; that stretch reads MRNLQKLVLSHMDVSRYVSPEQKKEIVTQFTTQFLK. LRR repeat units lie at residues 267-292, 293-324, 325-345, 349-376, and 377-401; these read LCCL…LSCL, KTSL…SQLK, TLDL…QILL, AATL…ALSR, and CFEL…LLSH.

This sequence belongs to the PRAME family.

This Homo sapiens (Human) protein is PRAME family member 5.